Consider the following 120-residue polypeptide: Ribosome-binding factor A (120 aa).

The protein belongs to the RbfA family. As to quaternary structure, monomer. Binds 30S ribosomal subunits, but not 50S ribosomal subunits or 70S ribosomes.

It localises to the cytoplasm. In terms of biological role, one of several proteins that assist in the late maturation steps of the functional core of the 30S ribosomal subunit. Associates with free 30S ribosomal subunits (but not with 30S subunits that are part of 70S ribosomes or polysomes). Required for efficient processing of 16S rRNA. May interact with the 5'-terminal helix region of 16S rRNA. This is Ribosome-binding factor A from Campylobacter jejuni subsp. jejuni serotype O:6 (strain 81116 / NCTC 11828).